Here is a 482-residue protein sequence, read N- to C-terminus: PAN domain-containing protein At5g03700 (482 aa).

An N-terminal signal peptide occupies residues 1-31 (MEGLCLNSFTRVLLLLFVFLVFSHKWQRVNA). In terms of domain architecture, PAN spans 330 to 411 (CDKTTEFKVV…SKLGYFKVRE (82 aa)). Disulfide bonds link cysteine 363-cysteine 385 and cysteine 367-cysteine 373. The chain crosses the membrane as a helical span at residues 425–445 (GMSLLAVIALVLMVAMVYVGF).

The protein resides in the membrane. In Arabidopsis thaliana (Mouse-ear cress), this protein is PAN domain-containing protein At5g03700.